Here is a 634-residue protein sequence, read N- to C-terminus: Probable potassium transport system protein Kup 1 (634 aa).

The next 12 helical transmembrane spans lie at 20–40 (FLTL…TSPL), 64–84 (VMSL…VLLI), 110–130 (FAAI…DAII), 148–168 (PVFD…LFVV), 176–196 (VAAW…LGGI), 224–244 (AGLL…ALYA), 256–276 (FAWF…QGAM), 290–310 (FLFP…ATII), 348–368 (IYIP…VFAF), 377–397 (AYGI…YFVM), 405–425 (VATS…FLMA), and 430–450 (IFEG…VMIT).

Belongs to the HAK/KUP transporter (TC 2.A.72) family.

The protein resides in the cell inner membrane. It carries out the reaction K(+)(in) + H(+)(in) = K(+)(out) + H(+)(out). Its function is as follows. Transport of potassium into the cell. Likely operates as a K(+):H(+) symporter. This chain is Probable potassium transport system protein Kup 1, found in Rhodopseudomonas palustris (strain BisB5).